A 458-amino-acid polypeptide reads, in one-letter code: NALCN channel auxiliary factor 1 (458 aa).

The chain crosses the membrane as a helical span at residues 40–60; it reads LSLASLLFFTVLLSDHLWFCA. The interval 70–155 is disordered; that stretch reads KEHQQQQRQQ…NRGKDDRGKA (86 aa). Positions 75–96 are enriched in low complexity; the sequence is QQRQQQQQQQQQRQRQQQQQQR. Over residues 136–145 the composition is skewed to gly residues; that stretch reads GDGGGGGGKG. Cystine bridges form between C191–C261, C226–C313, C246–C261, C304–C341, C324–C377, C330–C376, and C334–C361. The N-linked (GlcNAc...) asparagine glycan is linked to N217. A helical membrane pass occupies residues 417–437; it reads LKLCVLVLILLHTVLTASAAQ.

The protein belongs to the NALF family. In terms of assembly, component of the NALCN channel complex. NALCN complex consists of NALCN and auxiliary subunits, UNC79, UNC80 and NACL1. These auxiliary subunits are essential for the NALCN channel function.

It is found in the cell membrane. Functionally, auxillary component of the NALCN sodium channel complex, a channel that regulates the resting membrane potential and controls neuronal excitability. In Homo sapiens (Human), this protein is NALCN channel auxiliary factor 1.